Here is a 201-residue protein sequence, read N- to C-terminus: LexA repressor (201 aa).

The H-T-H motif DNA-binding region spans 28 to 48; it reads RAEIANQLGFRSANAAEEHLK. Residues serine 118 and lysine 155 each act as for autocatalytic cleavage activity in the active site.

This sequence belongs to the peptidase S24 family. Homodimer.

It catalyses the reaction Hydrolysis of Ala-|-Gly bond in repressor LexA.. Represses a number of genes involved in the response to DNA damage (SOS response), including recA and lexA. In the presence of single-stranded DNA, RecA interacts with LexA causing an autocatalytic cleavage which disrupts the DNA-binding part of LexA, leading to derepression of the SOS regulon and eventually DNA repair. In Saccharophagus degradans (strain 2-40 / ATCC 43961 / DSM 17024), this protein is LexA repressor.